Consider the following 299-residue polypeptide: UDP-3-O-acyl-N-acetylglucosamine deacetylase (299 aa).

Residues H75, H232, and D236 each coordinate Zn(2+). The Proton donor role is filled by H259.

This sequence belongs to the LpxC family. Zn(2+) is required as a cofactor.

The catalysed reaction is a UDP-3-O-[(3R)-3-hydroxyacyl]-N-acetyl-alpha-D-glucosamine + H2O = a UDP-3-O-[(3R)-3-hydroxyacyl]-alpha-D-glucosamine + acetate. It functions in the pathway glycolipid biosynthesis; lipid IV(A) biosynthesis; lipid IV(A) from (3R)-3-hydroxytetradecanoyl-[acyl-carrier-protein] and UDP-N-acetyl-alpha-D-glucosamine: step 2/6. Functionally, catalyzes the hydrolysis of UDP-3-O-myristoyl-N-acetylglucosamine to form UDP-3-O-myristoylglucosamine and acetate, the committed step in lipid A biosynthesis. This Helicobacter hepaticus (strain ATCC 51449 / 3B1) protein is UDP-3-O-acyl-N-acetylglucosamine deacetylase.